The primary structure comprises 252 residues: Type I iodothyronine deiodinase (252 aa).

At 1–17 (MESLLQTIKLMLRYIQK) the chain is on the extracellular side. The helical; Signal-anchor for type III membrane protein transmembrane segment at 18–38 (ALILFFLFLYVVVGKVLMFLF) threads the bilayer. At 39 to 252 (PQTMASVLKS…EVCSVLEKKK (214 aa)) the chain is on the cytoplasmic side. Sec130 is an active-site residue. Sec130 is a non-standard amino acid (selenocysteine).

It belongs to the iodothyronine deiodinase family. As to quaternary structure, predominantly monomer. Can form homodimers but homodimerization is not essential for enzyme activity.

It localises to the cell membrane. Its subcellular location is the endoplasmic reticulum membrane. The protein resides in the basolateral cell membrane. It carries out the reaction 3,3',5-triiodo-L-thyronine + iodide + A + H(+) = L-thyroxine + AH2. It catalyses the reaction 3,3',5'-triiodo-L-thyronine + iodide + A + H(+) = L-thyroxine + AH2. The enzyme catalyses 3,3'-diiodo-L-thyronine + iodide + A + H(+) = 3,3',5'-triiodo-L-thyronine + AH2. The catalysed reaction is 3,3'-diiodo-L-thyronine + iodide + A + H(+) = 3,3',5-triiodo-L-thyronine + AH2. It carries out the reaction 3'-iodo-L-thyronine + iodide + A + H(+) = 3',5'-diiodo-L-thyronine + AH2. It catalyses the reaction 3-iodo-L-thyronine + iodide + A + H(+) = 3,5-diiodo-L-thyronine + AH2. The enzyme catalyses 3-iodo-L-thyronine + iodide + A + H(+) = 3,3'-diiodo-L-thyronine + AH2. The catalysed reaction is 3,3'-diiodothyronamine + iodide + A + H(+) = 3,3',5'-triiodothyronamine + AH2. It carries out the reaction 3'-iodothyronamine + iodide + A + H(+) = 3',5'-diiodothyronamine + AH2. It catalyses the reaction 3-iodothyronamine + iodide + A + H(+) = 3,3'-diiodothyronamine + AH2. The enzyme catalyses 3,3'-diiodothyronamine + iodide + A + H(+) = 3,3',5-triiodothyronamine + AH2. The catalysed reaction is 3-iodothyronamine + iodide + A + H(+) = 3,5-diiodothyronamine + AH2. It carries out the reaction 3,3'-diiodo-L-thyronine sulfate + iodide + A + H(+) = 3,3',5'-triiodo-L-thyronine sulfate + AH2. It catalyses the reaction 3,3',5'-triiodo-L-thyronine sulfate + iodide + A + H(+) = L-thyroxine sulfate + AH2. The enzyme catalyses 3,3'-diiodo-L-thyronine sulfate + iodide + A + H(+) = 3,3',5-triiodo-L-thyronine sulfate + AH2. Its activity is regulated as follows. Lacks sensitivity to 6-n-propylthiouracil. Functionally, plays a crucial role in the metabolism of thyroid hormones (TH) and has specific roles in TH activation and inactivation by deiodination. Catalyzes the deiodination of L-thyroxine (T4) to 3,5,3'-triiodothyronine (T3) and 3,3',5'-triiodothyronine (rT3) to 3,3'-diiodothyronine (3,3'-T2) via outer-ring deiodination (ORD). Catalyzes the deiodiantion of T4 to rT3 and T3 to 3,3'-T2 via inner-ring deiodination (IRD). Catalyzes the deiodination of 3',5'-diiodothyronine (3',5'-T2) to 3'-monoiodothyronine (3'-T1) via ORD. Catalyzes the deiodination of 3,5-diiodothyronine (3,5-T2) to 3-monoiodothyronine (3-T1) and 3,3'-T2 to 3-T1 via IRD. Catalyzes the phenolic ring deiodinations of 3,3',5'-triiodothyronamine, 3',5'-diiodothyronamine and 3,3'-diiodothyronamine as well as tyrosyl ring deiodinations of 3,5,3'-triiodothyronamine and 3,5-diiodothyronamine. Catalyzes the deiodination of L-thyroxine sulfate and 3,3',5-triiodo-L-thyronine sulfate via IRD and of 3,3',5'-triiodo-L-thyronine sulfate via ORD. The chain is Type I iodothyronine deiodinase (dio1) from Xenopus laevis (African clawed frog).